A 37-amino-acid polypeptide reads, in one-letter code: Potassium channel toxin alpha-KTx 4.3 (37 aa).

Disulfide bonds link Cys-7-Cys-28, Cys-13-Cys-33, and Cys-17-Cys-35. Positions 26 to 33 (GKCMNGKC) are interaction with Ca(2+)-activated K(+) channels.

As to expression, expressed by the venom gland.

It localises to the secreted. Functionally, blocks reversibly Shaker B potassium-channels. This chain is Potassium channel toxin alpha-KTx 4.3, found in Tityus discrepans (Venezuelan scorpion).